A 244-amino-acid polypeptide reads, in one-letter code: UPF0173 metal-dependent hydrolase Rcas_3617 (244 aa).

Belongs to the UPF0173 family.

This chain is UPF0173 metal-dependent hydrolase Rcas_3617, found in Roseiflexus castenholzii (strain DSM 13941 / HLO8).